The chain runs to 843 residues: Glycogen phosphorylase, brain form (843 aa).

The residue at position 2 (A2) is an N-acetylalanine. The residue at position 15 (S15) is a Phosphoserine; by PHK; in form phosphorylase A. AMP contacts are provided by D43, Y197, and R310. At Y197 the chain carries Phosphotyrosine. Y473 carries the phosphotyrosine modification. K569 lines the pyridoxal 5'-phosphate pocket. The pyridoxal 5'-phosphate stretch occupies residues 677–678 (TG). An N6-(pyridoxal phosphate)lysine modification is found at K681.

It belongs to the glycogen phosphorylase family. Homodimer. Dimers associate into a tetramer to form the enzymatically active phosphorylase A. The cofactor is pyridoxal 5'-phosphate. Post-translationally, phosphorylation of Ser-15 converts phosphorylase B (unphosphorylated) to phosphorylase A.

The catalysed reaction is [(1-&gt;4)-alpha-D-glucosyl](n) + phosphate = [(1-&gt;4)-alpha-D-glucosyl](n-1) + alpha-D-glucose 1-phosphate. Activity of phosphorylase is controlled both by allosteric means (through the non-covalent binding of metabolites) and by covalent modification. Thus AMP allosterically activates, whereas ATP, ADP, and glucose-6-phosphate allosterically inhibit, phosphorylase B. Its function is as follows. Glycogen phosphorylase that regulates glycogen mobilization. Phosphorylase is an important allosteric enzyme in carbohydrate metabolism. Enzymes from different sources differ in their regulatory mechanisms and in their natural substrates. However, all known phosphorylases share catalytic and structural properties. The chain is Glycogen phosphorylase, brain form (PYGB) from Pongo abelii (Sumatran orangutan).